We begin with the raw amino-acid sequence, 595 residues long: Aspartate--tRNA(Asp/Asn) ligase (595 aa).

Glutamate 174 contributes to the L-aspartate binding site. Residues 198-201 (QLFK) are aspartate. Arginine 220 provides a ligand contact to L-aspartate. Residues 220–222 (RDE) and glutamine 229 each bind ATP. Histidine 452 contributes to the L-aspartate binding site. Glutamate 486 contacts ATP. Position 493 (arginine 493) interacts with L-aspartate. 538–541 (GLDR) is an ATP binding site.

It belongs to the class-II aminoacyl-tRNA synthetase family. Type 1 subfamily. In terms of assembly, homodimer.

The protein resides in the cytoplasm. The catalysed reaction is tRNA(Asx) + L-aspartate + ATP = L-aspartyl-tRNA(Asx) + AMP + diphosphate. Aspartyl-tRNA synthetase with relaxed tRNA specificity since it is able to aspartylate not only its cognate tRNA(Asp) but also tRNA(Asn). Reaction proceeds in two steps: L-aspartate is first activated by ATP to form Asp-AMP and then transferred to the acceptor end of tRNA(Asp/Asn). This is Aspartate--tRNA(Asp/Asn) ligase from Nitrosococcus oceani (strain ATCC 19707 / BCRC 17464 / JCM 30415 / NCIMB 11848 / C-107).